The following is a 257-amino-acid chain: E3 ubiquitin-protein ligase RNF170 (257 aa).

Residues 1 to 24 (MADNQEGRPYFPLDEGSIIEGVSD) are Lumenal-facing. A helical membrane pass occupies residues 25–45 (QVIVVVLLSFVAVGSLLYLLL). Residues 46 to 200 (RNDEQNIHPE…GGLFWMFRIR (155 aa)) lie on the Cytoplasmic side of the membrane. Residues 87–130 (CPVCLQQATFPVETNCGHLFCGSCIIAYWRYGSWLGAINCPICR) form an RING-type zinc finger. A helical transmembrane segment spans residues 201 to 221 (IVLCLLGALFYLVSPLDIIPE). Residue Ala222 is a topological domain, lumenal. The helical transmembrane segment at 223–243 (VFGLLGFLDDFFVLFLLLIYI) threads the bilayer. The Cytoplasmic segment spans residues 244–257 (SIMYREVVTQRLYR).

The protein localises to the endoplasmic reticulum membrane. The catalysed reaction is S-ubiquitinyl-[E2 ubiquitin-conjugating enzyme]-L-cysteine + [acceptor protein]-L-lysine = [E2 ubiquitin-conjugating enzyme]-L-cysteine + N(6)-ubiquitinyl-[acceptor protein]-L-lysine.. It functions in the pathway protein modification; protein ubiquitination. Functionally, E3 ubiquitin-protein ligase that plays an essential role in stimulus-induced inositol 1,4,5-trisphosphate receptor (ITPR) ubiquitination and degradation via the endoplasmic reticulum-associated degradation (ERAD) pathway. Also involved in ITPR turnover in resting cells. The polypeptide is E3 ubiquitin-protein ligase RNF170 (rnf170) (Xenopus tropicalis (Western clawed frog)).